Here is a 355-residue protein sequence, read N- to C-terminus: Mitogen-activated protein kinase (355 aa).

Residues 23–311 enclose the Protein kinase domain; sequence YDIQDVVGEG…VEEALKHPYL (289 aa). ATP contacts are provided by residues 29 to 37 and lysine 52; that span reads VGEGAYGVV. The Proton acceptor role is filled by aspartate 147. Threonine 183 carries the phosphothreonine modification. A TXY motif is present at residues 183-185; it reads TEY. Tyrosine 185 is modified (phosphotyrosine).

The protein belongs to the protein kinase superfamily. CMGC Ser/Thr protein kinase family. MAP kinase subfamily. Post-translationally, dually phosphorylated on Thr-183 and Tyr-185, which activates the enzyme.

It is found in the nucleus. It catalyses the reaction L-seryl-[protein] + ATP = O-phospho-L-seryl-[protein] + ADP + H(+). The enzyme catalyses L-threonyl-[protein] + ATP = O-phospho-L-threonyl-[protein] + ADP + H(+). With respect to regulation, activated by tyrosine and threonine phosphorylation. Responds to activation by environmental stress by phosphorylating downstream targets. The chain is Mitogen-activated protein kinase (MAPK) from Fusarium vanettenii (Neocosmospora pisi).